Reading from the N-terminus, the 1194-residue chain is MTPQQKSAAHLPLLYNPFLNCIFNNPYYNKAPFKQTIEELARNHNDFTILVPPAHVLHHCYDPATELSSHKVLLRELCYNNEEFIRSHIIRTGTSYSSTITPISKVQSVIYNTMSGKQVLFKNGMVFMGKGFKRSLKLNVLSFQYFSSFCDYFPKGSKFMILYVEDCLIGSFDPHQHLSRIPQDDETSSQRSVSQQEVQDSITFEKLLRSFPLLSKAVSERFYRLFHHNNHQFRVLRINTRKKLEHIRIEFHSMLDEAYKIIQDSIKVENPDSEQTYNIINHILSIYPGLDLNRLVHDYVELNLYDKLWAQLLFQYNYPNDDKQSYDPEAVKFLTAETYNRLSCLALNQLDIPIFKPWQINTLQEKVALAIEEFSKLADSSIVNSTAKTKIIINTVNILSDLKSGSDFVMDADVLIGLLIMVIVHSKIDNLEAHLYYIKNFSAIDYSGDGHFNYIMSNLDAVLFHLSSSLSDELSDLIVHSQQNFEFWSAIQQGDVDAAKTMLDEVHENYVGKEIPSSHYLKSKNINGESCIMFAIKAKNFSIYDMLINEHPNWFSIDELLFDKNIITNQNLVMVALADECPEIATDLVNVILSSATKEEQVAYFNSVDNAGRSVGHYLFHNYKLMGILGDIIDWELKDLNSHTPLFSICRCYDHPNYPTLISEAFACVYQKYGGENINFDKHIDKSGNTLLHIILKNIPESQLLSRKENLISVNQQSSKYMTPLTLYVKYYRLENLKDLLQDNRLDFLLEDSKNCYNVFDYFGFSSMKSTIPNETFKKIESLIFGFYIDNFLPKVDCKKLFSLNAKYDQNKRDWFIFFRDSDGISNHKSLEMLKQIIYFIKLDNPCTYLPDKDVVWLNYGLGSTTPYFHKYRINRLIDTLNLFFTGLLYRNGNCYFERFLETGRDRERSTLDFIQEASLRQEKKRANLGVVKLKSSQIDEIEFFLTFAISDLYKYKDALHKFGKLSAIADMKQTDIRTVYLSALKKLVDREGNYTDELKSKVPVEAEIQDSCWGGFHSYVFWLQISLDELLKSVNKILEEIRTWKELYSSIRELNSELHQIEEKSPSNNNGGSLSRRSTFSIEPIPELDFEDDTTSAFFNFSNIIESKKARYKKLLMTKSEKVKQIMKLNVDIKWEHEVVASEISSFLKFRCDFLRFGVKTYVNSETKRIRNNSIELRKLLRDVKNNGKSYRK.

The VPS9 domain occupies 324–475; the sequence is QSYDPEAVKF…LSSSLSDELS (152 aa).

This sequence belongs to the UPF0507 family.

The sequence is that of UPF0507 protein PICST_55861 from Scheffersomyces stipitis (strain ATCC 58785 / CBS 6054 / NBRC 10063 / NRRL Y-11545) (Yeast).